The sequence spans 171 residues: Adenine phosphoribosyltransferase (171 aa).

The protein belongs to the purine/pyrimidine phosphoribosyltransferase family. As to quaternary structure, homodimer.

Its subcellular location is the cytoplasm. It catalyses the reaction AMP + diphosphate = 5-phospho-alpha-D-ribose 1-diphosphate + adenine. It functions in the pathway purine metabolism; AMP biosynthesis via salvage pathway; AMP from adenine: step 1/1. Its function is as follows. Catalyzes a salvage reaction resulting in the formation of AMP, that is energically less costly than de novo synthesis. This Halalkalibacterium halodurans (strain ATCC BAA-125 / DSM 18197 / FERM 7344 / JCM 9153 / C-125) (Bacillus halodurans) protein is Adenine phosphoribosyltransferase.